Here is a 254-residue protein sequence, read N- to C-terminus: 3-deoxy-manno-octulosonate cytidylyltransferase (254 aa).

The protein belongs to the KdsB family.

The protein resides in the cytoplasm. It catalyses the reaction 3-deoxy-alpha-D-manno-oct-2-ulosonate + CTP = CMP-3-deoxy-beta-D-manno-octulosonate + diphosphate. It functions in the pathway nucleotide-sugar biosynthesis; CMP-3-deoxy-D-manno-octulosonate biosynthesis; CMP-3-deoxy-D-manno-octulosonate from 3-deoxy-D-manno-octulosonate and CTP: step 1/1. The protein operates within bacterial outer membrane biogenesis; lipopolysaccharide biosynthesis. Its function is as follows. Activates KDO (a required 8-carbon sugar) for incorporation into bacterial lipopolysaccharide in Gram-negative bacteria. This Pseudomonas aeruginosa (strain ATCC 15692 / DSM 22644 / CIP 104116 / JCM 14847 / LMG 12228 / 1C / PRS 101 / PAO1) protein is 3-deoxy-manno-octulosonate cytidylyltransferase.